The sequence spans 566 residues: Amidophosphoribosyltransferase 1, chloroplastic (566 aa).

Low complexity predominate over residues 1–13; that stretch reads MAATTSFSSSLSL. 2 disordered regions span residues 1 to 28 and 58 to 87; these read MAAT…QPLP and VSSY…DEKP. The N-terminal 58 residues, 1-58, are a transit peptide targeting the chloroplast; that stretch reads MAATTSFSSSLSLITKPNNSSYTNQPLPLFPKPFLKPPHLSLLPSPLSSPPPSLIHGV. The span at 15 to 25 shows a compositional bias: polar residues; that stretch reads TKPNNSSYTNQ. The segment covering 59–68 has biased composition (low complexity); it reads SSYFSSPSPS. Over residues 70-87 the composition is skewed to basic and acidic residues; it reads DNSHTPFDYHNDEDDEKP. Cysteine 91 (nucleophile) is an active-site residue. A Glutamine amidotransferase type-2 domain is found at 91 to 311; that stretch reads CGVVGIYGDP…PGEVLVVDKD (221 aa). [4Fe-4S] cluster-binding residues include cysteine 327, cysteine 473, cysteine 524, and cysteine 527.

In the C-terminal section; belongs to the purine/pyrimidine phosphoribosyltransferase family. [4Fe-4S] cluster serves as cofactor. It depends on Mg(2+) as a cofactor. As to expression, expressed in flowers and roots. Also present in leaves, and, to a lower extent, in cotyledons.

Its subcellular location is the plastid. It localises to the chloroplast stroma. The enzyme catalyses 5-phospho-beta-D-ribosylamine + L-glutamate + diphosphate = 5-phospho-alpha-D-ribose 1-diphosphate + L-glutamine + H2O. Its pathway is purine metabolism; IMP biosynthesis via de novo pathway; N(1)-(5-phospho-D-ribosyl)glycinamide from 5-phospho-alpha-D-ribose 1-diphosphate: step 1/2. Catalyzes the first committed step of 'de novo' purine biosynthesis from glutamine. Involved in plastid biogenesis and cell division. The polypeptide is Amidophosphoribosyltransferase 1, chloroplastic (ASE1) (Arabidopsis thaliana (Mouse-ear cress)).